The primary structure comprises 586 residues: Heterogeneous nuclear ribonucleoprotein L (586 aa).

Over residues Met-1–Leu-16 the composition is skewed to basic residues. The tract at residues Met-1–Ala-97 is disordered. Residues Glu-17–Arg-27 show a composition bias toward basic and acidic residues. The segment covering Arg-28–Ala-37 has biased composition (low complexity). Over residues Ala-38–Gly-54 the composition is skewed to gly residues. Glycyl lysine isopeptide (Lys-Gly) (interchain with G-Cter in SUMO2) cross-links involve residues Lys-59 and Lys-62. The segment covering Gln-69–Glu-87 has biased composition (gly residues). Position 98 is a phosphoserine (Ser-98). Positions Pro-99–Ser-173 constitute an RRM 1 domain. A Glycyl lysine isopeptide (Lys-Gly) (interchain with G-Cter in SUMO2) cross-link involves residue Lys-133. Ser-182 is subject to Phosphoserine. In terms of domain architecture, RRM 2 spans Ser-190–Pro-267. N6-acetyllysine is present on Lys-266. Over residues Asp-281–Asn-298 the composition is skewed to polar residues. A disordered region spans residues Asp-281–Ala-376. Phosphoserine is present on residues Ser-288 and Ser-295. Residue Lys-299 forms a Glycyl lysine isopeptide (Lys-Gly) (interchain with G-Cter in SUMO2) linkage. An asymmetric dimethylarginine mark is found at Arg-351 and Arg-355. The span at Gly-361–Tyr-372 shows a compositional bias: pro residues. Ser-378 is subject to Phosphoserine. RRM domains are found at residues Pro-379–Glu-476 and Arg-492–Ser-580. Ser-541 carries the phosphoserine; by CaMK4 modification. Residue Lys-565 forms a Glycyl lysine isopeptide (Lys-Gly) (interchain with G-Cter in SUMO2) linkage.

In terms of assembly, identified in a IGF2BP1-dependent mRNP granule complex containing untranslated mRNAs. Interacts with HNRNPLL. Interacts with APEX1; the interaction is DNA-dependent. Component of a complex with SETD2. Interacts with ELAVL1. Part of a transcription inhibitory ribonucleoprotein complex composed at least of the circular RNA circZNF827, ZNF827 and HNRNPK. Interacts with CHD8 in an RNA-dependent manner. Post-translationally, phosphorylation at Ser-541 by CaMK4 enhances interaction with a CaMK4-responsive RNA element (CaRRE1), and prevents inclusion of the stress axis-regulated exon (STREX) of the KCNMA1 potassium channel transcripts upon membrane depolarization. In terms of tissue distribution, detected in hematopoietic cells, including lymphoid progenitor cells.

Its subcellular location is the nucleus. It localises to the nucleoplasm. The protein resides in the cytoplasm. Functionally, splicing factor binding to exonic or intronic sites and acting as either an activator or repressor of exon inclusion. Exhibits a binding preference for CA-rich elements. Component of the heterogeneous nuclear ribonucleoprotein (hnRNP) complexes and associated with most nascent transcripts. Associates, together with APEX1, to the negative calcium responsive element (nCaRE) B2 of the APEX2 promoter. As part of a ribonucleoprotein complex composed at least of ZNF827, HNRNPK and the circular RNA circZNF827 that nucleates the complex on chromatin, may negatively regulate the transcription of genes involved in neuronal differentiation. Regulates alternative splicing of a core group of genes involved in neuronal differentiation, likely by mediating H3K36me3-coupled transcription elongation and co-transcriptional RNA processing via interaction with CHD8. The sequence is that of Heterogeneous nuclear ribonucleoprotein L (Hnrnpl) from Mus musculus (Mouse).